The chain runs to 109 residues: Large ribosomal subunit protein P1A (109 aa).

Positions A69–E84 are enriched in low complexity. Residues A69–D109 are disordered. The span at K94–M103 shows a compositional bias: acidic residues.

Belongs to the eukaryotic ribosomal protein P1/P2 family. Component of the large ribosomal subunit (LSU). Mature yeast ribosomes consist of a small (40S) and a large (60S) subunit. The 40S small subunit contains 1 molecule of ribosomal RNA (18S rRNA) and at least 33 different proteins. The large 60S subunit contains 3 rRNA molecules (25S, 5.8S and 5S rRNA) and at least 46 different proteins. The acidic ribosomal P-proteins form the stalk structure of the 60S subunit. They are organized as a pentameric complex in which uL10/P0 interacts with 2 heterodimers of P1 and P2 proteins.

The protein localises to the cytoplasm. Functionally, component of the ribosome, a large ribonucleoprotein complex responsible for the synthesis of proteins in the cell. The small ribosomal subunit (SSU) binds messenger RNAs (mRNAs) and translates the encoded message by selecting cognate aminoacyl-transfer RNA (tRNA) molecules. The large subunit (LSU) contains the ribosomal catalytic site termed the peptidyl transferase center (PTC), which catalyzes the formation of peptide bonds, thereby polymerizing the amino acids delivered by tRNAs into a polypeptide chain. The nascent polypeptides leave the ribosome through a tunnel in the LSU and interact with protein factors that function in enzymatic processing, targeting, and the membrane insertion of nascent chains at the exit of the ribosomal tunnel. This chain is Large ribosomal subunit protein P1A (rpp101), found in Schizosaccharomyces pombe (strain 972 / ATCC 24843) (Fission yeast).